The chain runs to 2223 residues: Protein CHROMATIN REMODELING 4 (2223 aa).

A disordered region spans residues F39–K69. Residues L55–K69 are compositionally biased toward basic and acidic residues. The PHD-type zinc-finger motif lies at Y75–N122. Basic and acidic residues-rich tracts occupy residues E173–G187, S207–G223, E248–K285, and E294–K305. Disordered regions lie at residues E173–D235, E248–D381, and A441–G474. Basic residues predominate over residues T306–L315. The span at E353–A368 shows a compositional bias: basic and acidic residues. A compositionally biased stretch (polar residues) spans T372–D381. The segment covering A441–D466 has biased composition (basic and acidic residues). Chromo domains lie at E531–K587 and K601–S663. The Helicase ATP-binding domain occupies R701–S878. D714–T721 contacts ATP. Positions D829 to H832 match the DEAH box motif. A Nuclear localization signal motif is present at residues L902–H909. Residues L1008–L1167 form the Helicase C-terminal domain. 6 disordered regions span residues E1268–V1300, E1341–K1380, R1394–P1463, S1483–P1511, L1760–F1779, and I2006–D2223. Basic and acidic residues predominate over residues E1363–K1380. A coiled-coil region spans residues R1375–L1402. A compositionally biased stretch (polar residues) spans P1403–A1414. Residues F2009–P2019 are compositionally biased toward pro residues. Basic residues predominate over residues S2025–H2035. Polar residues-rich tracts occupy residues Q2039–Q2061, G2075–L2096, and T2128–Q2148. A compositionally biased stretch (basic and acidic residues) spans D2157–E2171. The stretch at I2189 to V2215 forms a coiled coil. The span at A2198 to E2210 shows a compositional bias: acidic residues.

This sequence belongs to the SNF2/RAD54 helicase family.

It localises to the nucleus. In terms of biological role, chromatin-remodeling protein that binds DNA through histones and regulates gene transcription. May specifically recognize and bind trimethylated 'Lys-27' (H3K27me3) and non-methylated 'Lys-4' of histone H3. Probable chromatin remodeling factor. This is Protein CHROMATIN REMODELING 4 from Arabidopsis thaliana (Mouse-ear cress).